A 937-amino-acid chain; its full sequence is DNA mismatch repair protein msh-2 (937 aa).

659 to 666 lines the ATP pocket; that stretch reads GPNMGGKS.

It belongs to the DNA mismatch repair MutS family. In terms of assembly, heterodimer of msh2 and msh6.

The protein localises to the nucleus. In terms of biological role, involved in post-replicative DNA-mismatch repair. Binds to mismatch-containing DNA. This is DNA mismatch repair protein msh-2 (msh-2) from Neurospora crassa (strain ATCC 24698 / 74-OR23-1A / CBS 708.71 / DSM 1257 / FGSC 987).